We begin with the raw amino-acid sequence, 461 residues long: Cysteine--tRNA ligase (461 aa).

C29 provides a ligand contact to Zn(2+). A 'HIGH' region motif is present at residues 31–41 (MTVYDFCHIGH). Residues C210, H235, and E239 each contribute to the Zn(2+) site. The 'KMSKS' region signature appears at 267–271 (KMSKS). ATP is bound at residue K270.

It belongs to the class-I aminoacyl-tRNA synthetase family. In terms of assembly, monomer. Requires Zn(2+) as cofactor.

It localises to the cytoplasm. It catalyses the reaction tRNA(Cys) + L-cysteine + ATP = L-cysteinyl-tRNA(Cys) + AMP + diphosphate. In Stutzerimonas stutzeri (strain A1501) (Pseudomonas stutzeri), this protein is Cysteine--tRNA ligase.